The primary structure comprises 113 residues: Integration host factor subunit alpha (113 aa).

2 disordered regions span residues 59–80 (GNFQ…GETI) and 94–113 (QKLK…ASAE). Residues 104–113 (NSPPDPASAE) are compositionally biased toward pro residues.

It belongs to the bacterial histone-like protein family. Heterodimer of an alpha and a beta chain.

This protein is one of the two subunits of integration host factor, a specific DNA-binding protein that functions in genetic recombination as well as in transcriptional and translational control. The chain is Integration host factor subunit alpha from Bordetella pertussis (strain Tohama I / ATCC BAA-589 / NCTC 13251).